Consider the following 112-residue polypeptide: Protein FAM32A (112 aa).

Residues 23-56 (TKRKKKKKDKDKAKMLEAMGTSKKSEEEKRRCLD) are disordered. Residues 45 to 56 (KKSEEEKRRCLD) show a composition bias toward basic and acidic residues.

The protein belongs to the FAM32 family. Widely expressed, with highest level in pancreas and lowest in muscle.

The protein resides in the nucleus. Its function is as follows. May induce G2 arrest and apoptosis. May also increase cell sensitivity to apoptotic stimuli. In cell lines, may play a role in the inhibition of anchor-independent cell growth. The polypeptide is Protein FAM32A (Fam32a) (Mus musculus (Mouse)).